The sequence spans 262 residues: Ribose-5-phosphate isomerase A (262 aa).

Substrate-binding positions include 33-36 (TGST), 89-92 (DGAD), and 102-105 (KGGG). The active-site Proton acceptor is Glu111. Lys129 is a substrate binding site.

It belongs to the ribose 5-phosphate isomerase family. In terms of assembly, homodimer.

The catalysed reaction is aldehydo-D-ribose 5-phosphate = D-ribulose 5-phosphate. The protein operates within carbohydrate degradation; pentose phosphate pathway; D-ribose 5-phosphate from D-ribulose 5-phosphate (non-oxidative stage): step 1/1. In terms of biological role, catalyzes the reversible conversion of ribose-5-phosphate to ribulose 5-phosphate. This Cereibacter sphaeroides (strain ATCC 17029 / ATH 2.4.9) (Rhodobacter sphaeroides) protein is Ribose-5-phosphate isomerase A.